Consider the following 214-residue polypeptide: Orotate phosphoribosyltransferase (214 aa).

5-phospho-alpha-D-ribose 1-diphosphate is bound at residue lysine 26. 34–35 (FF) is a binding site for orotate. 5-phospho-alpha-D-ribose 1-diphosphate-binding positions include 72–73 (YK), arginine 98, lysine 99, lysine 102, histidine 104, and 123–131 (DDVISAGTS). Orotate contacts are provided by serine 127 and arginine 155.

This sequence belongs to the purine/pyrimidine phosphoribosyltransferase family. PyrE subfamily. Homodimer. It depends on Mg(2+) as a cofactor.

It carries out the reaction orotidine 5'-phosphate + diphosphate = orotate + 5-phospho-alpha-D-ribose 1-diphosphate. It participates in pyrimidine metabolism; UMP biosynthesis via de novo pathway; UMP from orotate: step 1/2. In terms of biological role, catalyzes the transfer of a ribosyl phosphate group from 5-phosphoribose 1-diphosphate to orotate, leading to the formation of orotidine monophosphate (OMP). The protein is Orotate phosphoribosyltransferase of Chromobacterium violaceum (strain ATCC 12472 / DSM 30191 / JCM 1249 / CCUG 213 / NBRC 12614 / NCIMB 9131 / NCTC 9757 / MK).